We begin with the raw amino-acid sequence, 663 residues long: Probable methylenetetrahydrofolate reductase (NADPH) (663 aa).

Glu76 functions as the Proton donor/acceptor in the catalytic mechanism. NAD(+)-binding positions include 76-81 (EFFPPR) and 107-108 (TW). Thr107 carries the phosphothreonine modification. FAD is bound by residues 107–108 (TW), His141, 171–173 (RGD), 187–188 (RA), Tyr210, 214–217 (HPQA), Asp223, and Lys230. Asp173 provides a ligand contact to substrate. Gln241, Tyr334, and Arg338 together coordinate substrate. Ser408 is modified (phosphoserine). Thr465 is modified (phosphothreonine). S-adenosyl-L-methionine contacts are provided by residues 477-480 (QPET), 497-501 (TVNSQ), Thr578, and Thr591.

The protein belongs to the methylenetetrahydrofolate reductase family. It depends on FAD as a cofactor.

It carries out the reaction (6S)-5-methyl-5,6,7,8-tetrahydrofolate + NADP(+) = (6R)-5,10-methylene-5,6,7,8-tetrahydrofolate + NADPH + H(+). It functions in the pathway one-carbon metabolism; tetrahydrofolate interconversion. The sequence is that of Probable methylenetetrahydrofolate reductase (NADPH) from Caenorhabditis elegans.